We begin with the raw amino-acid sequence, 115 residues long: Cytochrome c (115 aa).

Heme c-binding residues include C26, C29, H30, and M91.

It belongs to the cytochrome c family. In terms of processing, binds 1 heme c group covalently per subunit.

Its subcellular location is the mitochondrion intermembrane space. In terms of biological role, electron carrier protein. The oxidized form of the cytochrome c heme group can accept an electron from the heme group of the cytochrome c1 subunit of cytochrome reductase. Cytochrome c then transfers this electron to the cytochrome oxidase complex, the final protein carrier in the mitochondrial electron-transport chain. The sequence is that of Cytochrome c from Theileria annulata.